Reading from the N-terminus, the 445-residue chain is Gastrula zinc finger protein 5-1 (445 aa).

The segment at 1–38 (MLQIKTEKEELDCGDDQNPKESSAVPLTDGASPEPQPQ) is disordered. Serine 89 is subject to Phosphoserine; by CK2. Residues 185 to 210 (FICCKCGDSFAHHSDLHTHLYACAGH) form a C2H2-type 1; atypical zinc finger. C2H2-type zinc fingers lie at residues 239–261 (FKCT…HRIH), 267–289 (FTCT…SRTH), 295–317 (YVCT…MRTH), 323–345 (YACK…QNSH), 351–373 (FICT…QRTH), 379–401 (FICS…QMIH), and 407–429 (FSCS…QRVH).

Its function is as follows. Binds to RNA homomers. The protein is Gastrula zinc finger protein 5-1 of Xenopus laevis (African clawed frog).